The primary structure comprises 151 residues: D-aminoacyl-tRNA deacylase (151 aa).

A Gly-cisPro motif, important for rejection of L-amino acids motif is present at residues 137–138 (GP).

The protein belongs to the DTD family. As to quaternary structure, homodimer.

It is found in the cytoplasm. It carries out the reaction glycyl-tRNA(Ala) + H2O = tRNA(Ala) + glycine + H(+). It catalyses the reaction a D-aminoacyl-tRNA + H2O = a tRNA + a D-alpha-amino acid + H(+). In terms of biological role, an aminoacyl-tRNA editing enzyme that deacylates mischarged D-aminoacyl-tRNAs. Also deacylates mischarged glycyl-tRNA(Ala), protecting cells against glycine mischarging by AlaRS. Acts via tRNA-based rather than protein-based catalysis; rejects L-amino acids rather than detecting D-amino acids in the active site. By recycling D-aminoacyl-tRNA to D-amino acids and free tRNA molecules, this enzyme counteracts the toxicity associated with the formation of D-aminoacyl-tRNA entities in vivo and helps enforce protein L-homochirality. This Azoarcus sp. (strain BH72) protein is D-aminoacyl-tRNA deacylase.